A 514-amino-acid chain; its full sequence is Maturase K (514 aa).

Belongs to the intron maturase 2 family. MatK subfamily.

Its subcellular location is the plastid. It localises to the chloroplast. Its function is as follows. Usually encoded in the trnK tRNA gene intron. Probably assists in splicing its own and other chloroplast group II introns. The polypeptide is Maturase K (Drosophyllum lusitanicum (Portuguese sundew)).